The sequence spans 295 residues: MLISLPKVRGIYRYDVLMSKATWLNVGGRADVLFKPCDIEDLTYLIKNTELPVSVIGATSNIIVRDSGIRGITVKLGKEFAYIKSKGNNSIVAGGAVLLSNLAHFAGNQQISGLEFLVGIPGTVGGGIEMNAGAYGSDIASVVQSIKAVNLEDGNLYEFSSEEMGYFYRGHSLKGNWIFVEAEFKGVNSEYELILQRLKEVIERKNKSQPIRGKTAGCIFKNPKNYRAWELIDKSGCLRLNIGGARISKKHCNFLLNYDNATASDLENLGNKVKDAVKDKFNVELEWEIRVLGSY.

Residues 26–189 enclose the FAD-binding PCMH-type domain; that stretch reads VGGRADVLFK…VEAEFKGVNS (164 aa). The active site involves Arg-169. Cys-218 acts as the Proton donor in catalysis. The active site involves Glu-288.

The protein belongs to the MurB family. Requires FAD as cofactor.

The protein resides in the cytoplasm. It catalyses the reaction UDP-N-acetyl-alpha-D-muramate + NADP(+) = UDP-N-acetyl-3-O-(1-carboxyvinyl)-alpha-D-glucosamine + NADPH + H(+). Its pathway is cell wall biogenesis; peptidoglycan biosynthesis. In terms of biological role, cell wall formation. This Wolbachia pipientis wMel protein is UDP-N-acetylenolpyruvoylglucosamine reductase.